Consider the following 552-residue polypeptide: Probable ABC transporter ATP-binding/permease protein HI_0664 (552 aa).

6 consecutive transmembrane segments (helical) span residues isoleucine 22–valine 42, leucine 52–valine 72, isoleucine 139–leucine 159, tryptophan 162–threonine 182, glutamate 253–leucine 273, and phenylalanine 278–leucine 298. The ABC transmembrane type-1 domain occupies methionine 23–glutamine 307. Residues isoleucine 340 to serine 552 enclose the ABC transporter domain. Glycine 372–serine 379 serves as a coordination point for ATP.

Belongs to the ABC transporter superfamily. Lipid exporter (TC 3.A.1.106) family.

Its subcellular location is the cell inner membrane. The protein is Probable ABC transporter ATP-binding/permease protein HI_0664 of Haemophilus influenzae (strain ATCC 51907 / DSM 11121 / KW20 / Rd).